The primary structure comprises 63 residues: Lantipeptide Flvbeta.a (63 aa).

The propeptide at 1 to 28 (MSEKNMEKAGVVKADELDEMIDETTGGA) is cleaved by FlvT. 2,3-didehydrobutyrine; by FlvM2 occurs at positions 30, 33, 38, and 39. The segment at residues 43 to 49 (SKGLQNC) is a cross-link (lanthionine (Ser-Cys); by FlvM2). 2,3-didehydrobutyrine; by FlvM2 is present on residues Thr54 and Thr55.

In terms of processing, maturation of FlvA2 peptides involves the enzymatic conversion of Thr, and Ser into dehydrated AA and the formation of thioether bonds with cysteines. Modifications are processed by the flavecin synthetase FlvM2. This is followed by membrane translocation and cleavage of the modified precursor. Contains DL-lanthionine, when coepressed in E.coli with the flavecin synthetase FlvM2.

It localises to the secreted. Its function is as follows. Lanthionine-containing peptide that does probably not show antibacterial activity, since its analog [+3]Flvbeta.a does not show antibacterial activity against M.luteus. Also does not show antibiotic activity when tested with [Del2]Flvalpha.a, an analog of Flvalpha.a, which is encoded by the same operon than Flvbeta.a. The bactericidal activity of lantibiotics is based on depolarization of energized bacterial cytoplasmic membranes, initiated by the formation of aqueous transmembrane pores. In Ruminococcus flavefaciens, this protein is Lantipeptide Flvbeta.a.